We begin with the raw amino-acid sequence, 439 residues long: O-fucosyltransferase 13 (439 aa).

Residues 8-28 form a helical; Signal-anchor for type II membrane protein membrane-spanning segment; the sequence is PLFVFVLTFSLLLVVILLSPS. Asparagine 104 and asparagine 119 each carry an N-linked (GlcNAc...) asparagine glycan. 238–240 lines the substrate pocket; sequence HLR. N-linked (GlcNAc...) asparagine glycosylation is present at asparagine 293.

This sequence belongs to the glycosyltransferase GT106 family.

It is found in the membrane. The protein operates within glycan metabolism. The sequence is that of O-fucosyltransferase 13 from Arabidopsis thaliana (Mouse-ear cress).